The sequence spans 385 residues: tRNA-specific 2-thiouridylase MnmA (385 aa).

ATP is bound by residues 29–36 (GLSGGVDS) and leucine 55. The active-site Nucleophile is the cysteine 116. Residues cysteine 116 and cysteine 225 are joined by a disulfide bond. Glycine 141 is a binding site for ATP. The segment at 175 to 177 (KDQ) is interaction with tRNA. The active-site Cysteine persulfide intermediate is the cysteine 225. An interaction with tRNA region spans residues 330–331 (RY).

The protein belongs to the MnmA/TRMU family.

Its subcellular location is the cytoplasm. The enzyme catalyses S-sulfanyl-L-cysteinyl-[protein] + uridine(34) in tRNA + AH2 + ATP = 2-thiouridine(34) in tRNA + L-cysteinyl-[protein] + A + AMP + diphosphate + H(+). Functionally, catalyzes the 2-thiolation of uridine at the wobble position (U34) of tRNA, leading to the formation of s(2)U34. The sequence is that of tRNA-specific 2-thiouridylase MnmA from Prochlorococcus marinus (strain MIT 9301).